The following is a 524-amino-acid chain: Zinc finger protein 346 (524 aa).

7 consecutive Matrin-type zinc fingers follow at residues 34–64, 92–126, 162–192, 226–260, 286–316, 343–373, and 400–430; these read TQCK…KVRR, DRSK…LRLR, KFCK…QETK, GKGF…LMSM, FSCD…HLKS, FSCD…HLMS, and FSCD…QLMS. Zn(2+) is bound by residues C36, C39, H52, H58, C97, C100, H113, and H119. 2 disordered regions span residues 453–486 and 494–513; these read SAGG…GSLP and PLYP…TMSP. The segment covering 476–486 has biased composition (low complexity); that stretch reads PKGPSSFGSLP.

The protein localises to the nucleus. The protein resides in the cytoplasm. In terms of biological role, binds preferentially to dsRNA, but also to RNA-DNA hybrids. This Xenopus laevis (African clawed frog) protein is Zinc finger protein 346.